The following is a 138-amino-acid chain: PTS system sorbose-specific EIIA component (138 aa).

The PTS EIIA type-4 domain maps to 1–125 (MEIILVGHAH…KIKEEFSTSL (125 aa)). The active-site Tele-phosphohistidine intermediate is the histidine 8. A Phosphohistidine; by HPr modification is found at histidine 8.

The protein localises to the cytoplasm. In terms of biological role, the phosphoenolpyruvate-dependent sugar phosphotransferase system (PTS), a major carbohydrate active transport system, catalyzes the phosphorylation of incoming sugar substrates concomitant with their translocation across the cell membrane. The enzyme II SorABCD PTS system is involved in L-sorbose transport. This chain is PTS system sorbose-specific EIIA component, found in Lacticaseibacillus casei (Lactobacillus casei).